The primary structure comprises 199 residues: MSQSHFFAHLSRLKLINRWPLMRNVRTENVSEHSLQVAMVAHALAAIKNRKFNGNVNAERIALLAMYHDASEVLTGDLPTPVKYFNSQIAQEYKAIEKIAQQKLVDMVPEELRDIFAALIDEHQCSEEERLLVKQADALCAYLKCLEELSAGNNEFLLAKSRLEKTLESRRSEEMDYFMQVFVPSFQLSLDEISQDSPL.

Substrate is bound by residues 18-19 (RW) and His-33. In terms of domain architecture, HD spans 30 to 142 (VSEHSLQVAM…VKQADALCAY (113 aa)). The a divalent metal cation site is built by His-33, His-68, and Asp-69. Substrate contacts are provided by residues Asp-69, 77–80 (DLPT), and Asp-137. Asp-137 provides a ligand contact to a divalent metal cation.

The protein belongs to the 5DNU family. In terms of assembly, homodimer. Requires a divalent metal cation as cofactor.

The protein resides in the cytoplasm. It carries out the reaction a 2'-deoxyribonucleoside 5'-phosphate + H2O = a 2'-deoxyribonucleoside + phosphate. Functionally, catalyzes the strictly specific dephosphorylation of 2'-deoxyribonucleoside 5'-monophosphates. The chain is 5'-deoxynucleotidase Ent638_2835 from Enterobacter sp. (strain 638).